The following is a 187-amino-acid chain: UPF0398 protein LBA1157 (187 aa).

The protein belongs to the UPF0398 family.

The protein is UPF0398 protein LBA1157 of Lactobacillus acidophilus (strain ATCC 700396 / NCK56 / N2 / NCFM).